A 1346-amino-acid chain; its full sequence is Cytokinesis protein sepH (1346 aa).

Positions 1–50 (MVSRSNEGPEAPHPASRTPGAPAKGRLTRLGSSPSKRDDKAKDDRMGKTS) are disordered. Residues 35–50 (SKRDDKAKDDRMGKTS) show a composition bias toward basic and acidic residues. The 251-residue stretch at 60–310 (YQLGDCLGRG…ARKLLKHPWI (251 aa)) folds into the Protein kinase domain. ATP contacts are provided by residues 66 to 74 (LGRGAFGSV) and Lys89. Asp182 functions as the Proton acceptor in the catalytic mechanism. Disordered regions lie at residues 342-380 (RSPE…PSPV), 446-497 (DESF…HMRR), and 1211-1295 (LCKL…AGAS). 2 stretches are compositionally biased toward polar residues: residues 477 to 489 (QQAN…SQNG) and 1220 to 1249 (RGST…NQSK).

It belongs to the protein kinase superfamily. Ser/Thr protein kinase family. CDC7 subfamily. The cofactor is Mg(2+).

It catalyses the reaction L-seryl-[protein] + ATP = O-phospho-L-seryl-[protein] + ADP + H(+). It carries out the reaction L-threonyl-[protein] + ATP = O-phospho-L-threonyl-[protein] + ADP + H(+). Required for early events during cytokinesis including localization of cytoskeletal components to the cytokinetic ring. This is Cytokinesis protein sepH from Emericella nidulans (strain FGSC A4 / ATCC 38163 / CBS 112.46 / NRRL 194 / M139) (Aspergillus nidulans).